The following is a 381-amino-acid chain: Sensor histidine kinase FlgS (381 aa).

The region spanning 177 to 381 (HLAHEIRNPV…TFEIKILNAS (205 aa)) is the Histidine kinase domain. A Phosphohistidine; by autocatalysis modification is found at His180.

As to quaternary structure, interacts (via its C-terminal kinase domain) with FlhA (via N-terminus). Post-translationally, autophosphorylated.

The catalysed reaction is ATP + protein L-histidine = ADP + protein N-phospho-L-histidine.. Its function is as follows. Member of the two-component regulatory system FlgR/FlgS that induces the transcriptional induction of the genes needed in motility and flagellar biogenesis. Also plays an essential role in bacterial survival at pH 2.5 independently of FlgR. Functions as a sensor protein kinase which is autophosphorylated at a histidine residue and transfers its phosphate group to the conserved aspartic acid residue in the regulatory domain of FlgR. In turn, FlgR functions as a transcriptional regulator initiating transcription from RpoN-dependent promoters. The polypeptide is Sensor histidine kinase FlgS (flgS) (Helicobacter pylori (strain ATCC 700392 / 26695) (Campylobacter pylori)).